Here is a 292-residue protein sequence, read N- to C-terminus: Ribosomal protein L11 methyltransferase (292 aa).

Residues threonine 144, glycine 165, aspartate 187, and asparagine 229 each contribute to the S-adenosyl-L-methionine site.

Belongs to the methyltransferase superfamily. PrmA family.

Its subcellular location is the cytoplasm. The enzyme catalyses L-lysyl-[protein] + 3 S-adenosyl-L-methionine = N(6),N(6),N(6)-trimethyl-L-lysyl-[protein] + 3 S-adenosyl-L-homocysteine + 3 H(+). Methylates ribosomal protein L11. This chain is Ribosomal protein L11 methyltransferase, found in Azotobacter vinelandii (strain DJ / ATCC BAA-1303).